The sequence spans 568 residues: Archaeosine synthase subunit alpha (568 aa).

In terms of domain architecture, PUA spans 496 to 565 (YDALKSYWVK…AKKGVAVKVR (70 aa)).

The protein belongs to the archaeosine synthase type 1 family. Forms a robust complex with the archaeosine synthase beta subunit RaSEA, likely an alpha(2)beta(2) heterotetrameric structure. Formation of this complex highly increases lysine transfer activity.

The enzyme catalyses 7-cyano-7-carbaguanosine(15) in tRNA + L-lysine = 7-N-[(5S)-5-amino-5-carboxypentyl]formamidino-7-deazaguanosine(15) in tRNA. The protein operates within tRNA modification; archaeosine-tRNA biosynthesis. In terms of biological role, functions in the biosynthesis of archaeosine, a modified nucleoside present in the dihydrouridine loop (D-loop) of archaeal tRNAs. Catalyzes the addition of L-lysine to the cyano group of 7-cyano-7-deazaguanine (preQ0)-modified tRNAs at position 15, to generate q0kN15-tRNA, a q0N lysine adduct identified as 7-N-[(5S)-5-amino-5-carboxypentyl]formamidino-7-deazaguanosine. The sequence is that of Archaeosine synthase subunit alpha from Thermococcus kodakarensis (strain ATCC BAA-918 / JCM 12380 / KOD1) (Pyrococcus kodakaraensis (strain KOD1)).